We begin with the raw amino-acid sequence, 365 residues long: Peptide chain release factor 2 (365 aa).

Glutamine 252 is modified (N5-methylglutamine).

Belongs to the prokaryotic/mitochondrial release factor family. In terms of processing, methylated by PrmC. Methylation increases the termination efficiency of RF2.

It localises to the cytoplasm. Peptide chain release factor 2 directs the termination of translation in response to the peptide chain termination codons UGA and UAA. The sequence is that of Peptide chain release factor 2 from Aeromonas hydrophila subsp. hydrophila (strain ATCC 7966 / DSM 30187 / BCRC 13018 / CCUG 14551 / JCM 1027 / KCTC 2358 / NCIMB 9240 / NCTC 8049).